A 59-amino-acid polypeptide reads, in one-letter code: Potassium channel toxin alpha-KTx 4.1 (59 aa).

The N-terminal stretch at 1 to 22 (MKAFYGILIIFILISMIDLSKQ) is a signal peptide. Cystine bridges form between Cys-29–Cys-50, Cys-35–Cys-55, and Cys-39–Cys-57. Positions 48-55 (GKCMNGKC) are interaction with Ca(2+)-activated K(+) channels.

It belongs to the short scorpion toxin superfamily. Potassium channel inhibitor family. Alpha-KTx 04 subfamily. As to expression, expressed by the venom gland.

Its subcellular location is the secreted. In terms of biological role, potently blocks Kv1.1/KCNA1 (85%), Kv1.2/KCNA2 (91%), Kv1.3/KCNA3 (89%), Kv1.6/KCNA6 (94%), and Shaker (97%). The sequence is that of Potassium channel toxin alpha-KTx 4.1 from Tityus serrulatus (Brazilian scorpion).